Reading from the N-terminus, the 103-residue chain is Large ribosomal subunit protein bL21 (103 aa).

Belongs to the bacterial ribosomal protein bL21 family. As to quaternary structure, part of the 50S ribosomal subunit. Contacts protein L20.

In terms of biological role, this protein binds to 23S rRNA in the presence of protein L20. This is Large ribosomal subunit protein bL21 from Wigglesworthia glossinidia brevipalpis.